A 376-amino-acid chain; its full sequence is Erythronate-4-phosphate dehydrogenase (376 aa).

Positions 45 and 67 each coordinate substrate. Residue Asp-147 coordinates NAD(+). Arg-209 is a catalytic residue. Asp-233 lines the NAD(+) pocket. Glu-238 is a catalytic residue. His-255 functions as the Proton donor in the catalytic mechanism. Gly-258 is an NAD(+) binding site. Tyr-259 is a binding site for substrate.

This sequence belongs to the D-isomer specific 2-hydroxyacid dehydrogenase family. PdxB subfamily. Homodimer.

The protein localises to the cytoplasm. It catalyses the reaction 4-phospho-D-erythronate + NAD(+) = (R)-3-hydroxy-2-oxo-4-phosphooxybutanoate + NADH + H(+). The protein operates within cofactor biosynthesis; pyridoxine 5'-phosphate biosynthesis; pyridoxine 5'-phosphate from D-erythrose 4-phosphate: step 2/5. Functionally, catalyzes the oxidation of erythronate-4-phosphate to 3-hydroxy-2-oxo-4-phosphonooxybutanoate. The chain is Erythronate-4-phosphate dehydrogenase from Shewanella oneidensis (strain ATCC 700550 / JCM 31522 / CIP 106686 / LMG 19005 / NCIMB 14063 / MR-1).